The primary structure comprises 715 residues: Putative macrophage stimulating 1-like protein (715 aa).

Positions 1–20 are cleaved as a signal peptide; the sequence is MAPAPVTLLAPGAASSMSCS. A PAN domain is found at 21–110; that stretch reads QPGQRSPSND…GRCDLFQEKG (90 aa). 4 consecutive Kringle domains span residues 63–156, 160–238, 252–345, and 353–464; these read GRCG…IKSC, ACVW…LPRC, SCFR…IRRC, and DCYH…LRRC. 12 cysteine pairs are disulfide-bonded: Cys127–Cys151, Cys161–Cys238, Cys182–Cys221, Cys210–Cys233, Cys253–Cys345, Cys316–Cys339, Cys354–Cys464, Cys375–Cys447, Cys511–Cys527, Cys606–Cys671, Cys636–Cys650, and Cys661–Cys689. One can recognise a Peptidase S1 domain in the interval 488-713; the sequence is VAGGHPGNSP…FVDWIHKVMR (226 aa).

Belongs to the peptidase S1 family. Plasminogen subfamily.

It is found in the secreted. The protein is Putative macrophage stimulating 1-like protein (MST1L) of Homo sapiens (Human).